The sequence spans 400 residues: Deoxyhypusine synthase-like protein (400 aa).

The disordered stretch occupies residues 372–400 (KLGKEQMPEPQSTEPVATYPCGTPIKGRK).

The protein belongs to the deoxyhypusine synthase family.

This chain is Deoxyhypusine synthase-like protein, found in Cyanothece sp. (strain PCC 7425 / ATCC 29141).